Here is a 1040-residue protein sequence, read N- to C-terminus: Multidrug resistance protein MdtB (1040 aa).

12 helical membrane-spanning segments follow: residues 25–45, 347–367, 369–389, 396–416, 440–460, 472–492, 537–557, 863–883, 888–908, 910–930, 968–988, and 998–1018; these read LLMA…PVAA, LMLA…NIPA, IIPG…MVFL, LTLM…IVVI, IGFT…PLLF, FAVT…TLTP, WLTL…WIVI, LGST…VLGV, FIHP…ALLA, IIAG…LIGI, ILMT…STGV, and IAMV…TPVI.

Belongs to the resistance-nodulation-cell division (RND) (TC 2.A.6) family. MdtB subfamily. Part of a tripartite efflux system composed of MdtA, MdtB and MdtC. MdtB forms a heteromultimer with MdtC.

It is found in the cell inner membrane. The sequence is that of Multidrug resistance protein MdtB from Salmonella gallinarum (strain 287/91 / NCTC 13346).